We begin with the raw amino-acid sequence, 547 residues long: Glucose-6-phosphate isomerase (547 aa).

The active-site Proton donor is the E351. Catalysis depends on residues H382 and K511.

Belongs to the GPI family.

Its subcellular location is the cytoplasm. The catalysed reaction is alpha-D-glucose 6-phosphate = beta-D-fructose 6-phosphate. The protein operates within carbohydrate biosynthesis; gluconeogenesis. It participates in carbohydrate degradation; glycolysis; D-glyceraldehyde 3-phosphate and glycerone phosphate from D-glucose: step 2/4. In terms of biological role, catalyzes the reversible isomerization of glucose-6-phosphate to fructose-6-phosphate. The chain is Glucose-6-phosphate isomerase from Xanthobacter autotrophicus (strain ATCC BAA-1158 / Py2).